A 635-amino-acid chain; its full sequence is Threonine--tRNA ligase (635 aa).

The region spanning 1–61 (MVSIRLPDGS…DRDASLAIVT (61 aa)) is the TGS domain. Positions 242–533 (DHRKLGKQLD…LIEHHAGAMP (292 aa)) are catalytic. Zn(2+)-binding residues include cysteine 333, histidine 384, and histidine 510.

The protein belongs to the class-II aminoacyl-tRNA synthetase family. In terms of assembly, homodimer. It depends on Zn(2+) as a cofactor.

It is found in the cytoplasm. It carries out the reaction tRNA(Thr) + L-threonine + ATP = L-threonyl-tRNA(Thr) + AMP + diphosphate + H(+). Its function is as follows. Catalyzes the attachment of threonine to tRNA(Thr) in a two-step reaction: L-threonine is first activated by ATP to form Thr-AMP and then transferred to the acceptor end of tRNA(Thr). Also edits incorrectly charged L-seryl-tRNA(Thr). The sequence is that of Threonine--tRNA ligase from Burkholderia vietnamiensis (strain G4 / LMG 22486) (Burkholderia cepacia (strain R1808)).